A 67-amino-acid chain; its full sequence is Large ribosomal subunit protein bL31 (67 aa).

Residues Cys16, Cys18, Cys38, and Cys41 each contribute to the Zn(2+) site.

It belongs to the bacterial ribosomal protein bL31 family. Type A subfamily. In terms of assembly, part of the 50S ribosomal subunit. It depends on Zn(2+) as a cofactor.

Binds the 23S rRNA. The sequence is that of Large ribosomal subunit protein bL31 from Thioalkalivibrio sulfidiphilus (strain HL-EbGR7).